We begin with the raw amino-acid sequence, 477 residues long: MKVTLPEFERAGVMVVGDVMLDRYWYGPTSRISPEAPVPVVKVNTIEERPGGAANVAMNIASLGANARLVGLTGIDDAARALSKSLADVNVKCDFVSVPTHPTITKLRVLSRNQQLIRLDFEEGFEGVDPQPLHERINQALSSIGALVLSDYAKGALASVQQMIQLARKAGVPVLIDPKSTDFERYRGATLLTPNLSEFEAVVGKCKTEEEIVERGMKLIADYELSALLVTRSEQGMSLLQPGKAPLHMPTQAQEVYDVTGAGDTVIGVLAATLAAGNSLEEACFFANAAAGVVVGKLGTSTVSPIELENAVRGRADTGFGVMTEEELKLAVAAARKRGEKVVMTNGVFDILHAGHVSYLANARKLGDRLIVAVNSDASTKRLKGDSRPVNPLEQRMIVLGALEAVDWVVSFEEDTPQRLIAGILPDLLVKGGDYKPEEIAGSKEVWANGGEVLVLNFEDGCSTTNIIKKIQQDKKG.

The segment at 1 to 318 (MKVTLPEFER…ENAVRGRADT (318 aa)) is ribokinase. The residue at position 179 (K179) is an N6-acetyllysine. 195–198 (NLSE) provides a ligand contact to ATP. D264 is an active-site residue. The cytidylyltransferase stretch occupies residues 344–477 (MTNGVFDILH…IKKIQQDKKG (134 aa)).

It in the N-terminal section; belongs to the carbohydrate kinase PfkB family. This sequence in the C-terminal section; belongs to the cytidylyltransferase family. As to quaternary structure, homodimer.

It catalyses the reaction D-glycero-beta-D-manno-heptose 7-phosphate + ATP = D-glycero-beta-D-manno-heptose 1,7-bisphosphate + ADP + H(+). It carries out the reaction D-glycero-beta-D-manno-heptose 1-phosphate + ATP + H(+) = ADP-D-glycero-beta-D-manno-heptose + diphosphate. It participates in nucleotide-sugar biosynthesis; ADP-L-glycero-beta-D-manno-heptose biosynthesis; ADP-L-glycero-beta-D-manno-heptose from D-glycero-beta-D-manno-heptose 7-phosphate: step 1/4. The protein operates within nucleotide-sugar biosynthesis; ADP-L-glycero-beta-D-manno-heptose biosynthesis; ADP-L-glycero-beta-D-manno-heptose from D-glycero-beta-D-manno-heptose 7-phosphate: step 3/4. In terms of biological role, catalyzes the phosphorylation of D-glycero-D-manno-heptose 7-phosphate at the C-1 position to selectively form D-glycero-beta-D-manno-heptose-1,7-bisphosphate. Functionally, catalyzes the ADP transfer from ATP to D-glycero-beta-D-manno-heptose 1-phosphate, yielding ADP-D-glycero-beta-D-manno-heptose. In Escherichia coli O9:H4 (strain HS), this protein is Bifunctional protein HldE.